We begin with the raw amino-acid sequence, 203 residues long: ER membrane protein complex subunit 8/9 homolog (203 aa).

The region spanning 4-140 is the MPN domain; it reads YKVSERAYAK…IQVFNCPGDS (137 aa).

It belongs to the EMC8/EMC9 family. Component of the ER membrane protein complex (EMC).

Its subcellular location is the endoplasmic reticulum membrane. Functionally, part of the endoplasmic reticulum membrane protein complex (EMC) that enables the energy-independent insertion into endoplasmic reticulum membranes of newly synthesized multi-pass membrane proteins like rhodopsins. This is ER membrane protein complex subunit 8/9 homolog from Drosophila melanogaster (Fruit fly).